A 133-amino-acid polypeptide reads, in one-letter code: S-adenosylmethionine decarboxylase proenzyme (133 aa).

The Schiff-base intermediate with substrate; via pyruvic acid role is filled by Ser-64. Ser-64 is subject to Pyruvic acid (Ser); by autocatalysis. The active-site Proton acceptor; for processing activity is His-69. Cys-84 (proton donor; for catalytic activity) is an active-site residue.

The protein belongs to the prokaryotic AdoMetDC family. Type 1 subfamily. Heterotetramer of two alpha and two beta chains arranged as a dimer of alpha/beta heterodimers. The cofactor is pyruvate. In terms of processing, is synthesized initially as an inactive proenzyme. Formation of the active enzyme involves a self-maturation process in which the active site pyruvoyl group is generated from an internal serine residue via an autocatalytic post-translational modification. Two non-identical subunits are generated from the proenzyme in this reaction, and the pyruvate is formed at the N-terminus of the alpha chain, which is derived from the carboxyl end of the proenzyme. The post-translation cleavage follows an unusual pathway, termed non-hydrolytic serinolysis, in which the side chain hydroxyl group of the serine supplies its oxygen atom to form the C-terminus of the beta chain, while the remainder of the serine residue undergoes an oxidative deamination to produce ammonia and the pyruvoyl group blocking the N-terminus of the alpha chain.

The enzyme catalyses S-adenosyl-L-methionine + H(+) = S-adenosyl 3-(methylsulfanyl)propylamine + CO2. The protein operates within amine and polyamine biosynthesis; S-adenosylmethioninamine biosynthesis; S-adenosylmethioninamine from S-adenosyl-L-methionine: step 1/1. Functionally, catalyzes the decarboxylation of S-adenosylmethionine to S-adenosylmethioninamine (dcAdoMet), the propylamine donor required for the synthesis of the polyamines spermine and spermidine from the diamine putrescine. This chain is S-adenosylmethionine decarboxylase proenzyme, found in Sulfurihydrogenibium sp. (strain YO3AOP1).